Here is a 736-residue protein sequence, read N- to C-terminus: Transcription regulator protein BACH1 (736 aa).

The BTB domain occupies 34–100; that stretch reads CDVTIFVEGQ…AYTAKLILSK (67 aa). Phosphoserine is present on Ser196. Basic and acidic residues predominate over residues 286-295; that stretch reads MEPEETKKDP. 2 disordered regions span residues 286 to 312 and 349 to 389; these read MEPE…FPHN and KPLS…RSSV. 2 positions are modified to phosphoserine: Ser364 and Ser445. A bZIP domain is found at 557–620; it reads CIHDIRRRSK…GETKQNLTGL (64 aa). The interval 562–578 is basic motif; sequence RRRSKNRIAAQRCRKRK. The interval 582-589 is leucine-zipper; the sequence is IQNLESEI. A disordered region spans residues 680–719; sequence LPPCARGNSEPGYARGQESQQMSTATSEQAGPAEQCRQSG. The segment covering 696 to 708 has biased composition (polar residues); sequence QESQQMSTATSEQ.

The protein belongs to the bZIP family. CNC subfamily. Heterodimer of BACH1 and MAFK. Ubiquitinated by the SCF(FBXL17) complex or by the by the SCF(FBXO22) complex, leading to its degradation by the proteasome. Under oxidative stress, reactive oxygen species covalently modify cysteine residues on the bZIP domain of BACH1 and release it from chromatin. If the BTB domain of BACH1 remains intact, its beta1-alpha6 degron is recognized by FBXO22, promoting its ubiquitination and degradation. If the structural integrity of the beta1-alpha6 degron is compromised, FBXL17 will transiently associate with the BACH1 BTB dimer and remodel it into stably bound monomer for ubiquitination and degradation.

The protein resides in the nucleus. Functionally, transcriptional regulator that acts as a repressor or activator, depending on the context. Binds to NF-E2 DNA binding sites. Plays important roles in coordinating transcription activation and repression by MAFK. Together with MAF, represses the transcription of genes under the control of the NFE2L2 oxidative stress pathway. This chain is Transcription regulator protein BACH1, found in Homo sapiens (Human).